Reading from the N-terminus, the 303-residue chain is N-acetyl-D-glucosamine kinase (303 aa).

Residues 4–11 (GFDIGGTK) and 133–140 (GVGGGLVL) each bind ATP. Positions 157, 177, 179, and 184 each coordinate Zn(2+).

This sequence belongs to the ROK (NagC/XylR) family. NagK subfamily.

It carries out the reaction N-acetyl-D-glucosamine + ATP = N-acetyl-D-glucosamine 6-phosphate + ADP + H(+). The protein operates within cell wall biogenesis; peptidoglycan recycling. Its function is as follows. Catalyzes the phosphorylation of N-acetyl-D-glucosamine (GlcNAc) derived from cell-wall degradation, yielding GlcNAc-6-P. The polypeptide is N-acetyl-D-glucosamine kinase (Salmonella newport (strain SL254)).